Consider the following 199-residue polypeptide: Ciliary neurotrophic factor (199 aa).

It belongs to the CNTF family. In terms of tissue distribution, nervous system.

Its subcellular location is the cytoplasm. Functionally, CNTF is a survival factor for various neuronal cell types. Seems to prevent the degeneration of motor axons after axotomy. In Oryctolagus cuniculus (Rabbit), this protein is Ciliary neurotrophic factor (CNTF).